Reading from the N-terminus, the 122-residue chain is Lysozyme (122 aa).

The region spanning 3-118 (GGIVSQRCLS…WNRLQKISGC (116 aa)) is the I-type lysozyme domain. 7 disulfides stabilise this stretch: cysteine 10–cysteine 86, cysteine 13–cysteine 118, cysteine 15–cysteine 21, cysteine 26–cysteine 35, cysteine 48–cysteine 68, cysteine 58–cysteine 64, and cysteine 82–cysteine 100. The Proton donor role is filled by glutamate 18. The active-site Nucleophile is aspartate 29. Residue 41-47 (KEAYWID) participates in substrate binding. Residues tyrosine 72, histidine 93, 93 to 95 (HNG), and lysine 102 each bind substrate.

This sequence belongs to the glycosyl hydrolase 22 family. Type-I lysozyme subfamily. As to quaternary structure, monomer.

It localises to the secreted. The catalysed reaction is Hydrolysis of (1-&gt;4)-beta-linkages between N-acetylmuramic acid and N-acetyl-D-glucosamine residues in a peptidoglycan and between N-acetyl-D-glucosamine residues in chitodextrins.. Functionally, has bacteriolytic activity against Gram-positive bacteria M.luteus. Also has chitinase activity. The polypeptide is Lysozyme (Meretrix lusoria (Hard clam)).